Reading from the N-terminus, the 21-residue chain is Dart gland peptide (21 aa).

The disordered stretch occupies residues 1–21; that stretch reads SINNTGGSGNRRLDKNGFAGQ. The N-linked (GlcNAc...) asparagine glycan is linked to Asn3.

It is found in the secreted. The protein is Dart gland peptide of Cornu aspersum (Brown garden snail).